Reading from the N-terminus, the 436-residue chain is Two-pore potassium channel 3 (436 aa).

Residues 1–148 (MANEGSDPLL…QKDPTETSRS (148 aa)) lie on the Cytoplasmic side of the membrane. A disordered region spans residues 62 to 117 (SHFIDSMKQPSPSSSSTAVNNPFSDSSTLDPLLPPPPPQPEPWLSDQTSSHCQGHA). The segment covering 71–92 (PSPSSSSTAVNNPFSDSSTLDP) has biased composition (low complexity). A compositionally biased stretch (pro residues) spans 93 to 102 (LLPPPPPQPE). The chain crosses the membrane as a helical span at residues 149–169 (VVRQAFALLVVYLSLGVLIYW). Positions 185-204 (DGLYFCIVTMCTIGYGDITP) form an intramembrane region, pore-forming. A helical transmembrane segment spans residues 212-232 (FSIMFVLVGFGFIDILLSGMV). Over 233 to 274 (SYVLDLQESYMLDSAKRRDEPEKRRSYIIDVKKGRMRIRLKV) the chain is Cytoplasmic. Residues 275–295 (ALALGVVVLCIAVGVGIMHFI) form a helical membrane-spanning segment. Residues 302–321 (DSFYLSVMSVTTVGYGDRAF) constitute an intramembrane region (pore-forming). A helical transmembrane segment spans residues 328–348 (LFAAIWLLVSTLAVARAFLYL). Residues 349–436 (AEARVDKRNR…LDLLEGGSGD (88 aa)) lie on the Cytoplasmic side of the membrane. EF-hand domains follow at residues 365–400 (LCET…EMEK) and 404–436 (KDIL…GSGD). The Ca(2+) site is built by Asp378, Asp380, Asn382, Cys384, Glu389, Asp417, Asn421, Lys423, and Asp428.

It belongs to the two pore domain potassium channel (TC 1.A.1.7) family. As to quaternary structure, homodimer. In terms of tissue distribution, expressed in roots, cotyledons, stems, hypocotyls, leaves and flowers. Detected in root tips and in mesophyll cells and guard cells of the leaves.

It is found in the vacuole membrane. The protein resides in the plastid. The protein localises to the chloroplast thylakoid membrane. Inhibited by barium, but not by tetraethylammonium. Its function is as follows. Two-pore potassium channel modulating the proton motive force (pmf) necessary to convert photochemical energy into physiological functions. Mediates the potassium efflux from the thylakoid lumen required for the regulation of the transmembrane electrical potential, the enhancement of the pH gradient for ATP synthesis, the regulation of electron flow, and pH-mediated photoprotective responses. Requires calcium for channel activity. This chain is Two-pore potassium channel 3, found in Arabidopsis thaliana (Mouse-ear cress).